Here is a 91-residue protein sequence, read N- to C-terminus: Protein transport protein Sec61 subunit beta (91 aa).

A disordered region spans residues 1–45 (MSTSAQVPGGPAAQMKRRNNAQRQEAKASQRPTSTRSVGAGGSSS). At 1–62 (MSTSAQVPGG…DESQGLKVDP (62 aa)) the chain is on the cytoplasmic side. The span at 30–45 (QRPTSTRSVGAGGSSS) shows a compositional bias: polar residues. Residues 63–83 (VVVMVLSLGFIFSVVALHILA) form a helical membrane-spanning segment.

Belongs to the SEC61-beta family. In terms of assembly, heterotrimeric complex composed of SEC61, SEB1 and SSS1.

Its subcellular location is the endoplasmic reticulum membrane. Its function is as follows. Necessary for protein translocation in the endoplasmic reticulum. In Yarrowia lipolytica (strain CLIB 122 / E 150) (Yeast), this protein is Protein transport protein Sec61 subunit beta (SBH1).